We begin with the raw amino-acid sequence, 201 residues long: Ras-related protein Rab-10 (201 aa).

Residue 16–23 coordinates GTP; that stretch reads GDSGVGKT. Positions 38–46 match the Effector region motif; it reads FISTIGIDF. Residues 64–68, 122–125, and 152–154 each bind GTP; these read DTAGQ, NKCD, and SAK. Residues 175-201 are disordered; that stretch reads PDSTDEQSRDTVNPVQPQRQSSSGGCC. Polar residues predominate over residues 184-201; sequence DTVNPVQPQRQSSSGGCC. S-geranylgeranyl cysteine attachment occurs at residues Cys-200 and Cys-201.

The protein belongs to the small GTPase superfamily. Rab family. Interacts (GTP-bound form) with ehbp-1 (via C-terminal coiled coil). Interacts (GTP-bound form) with cnt-1 (via C-terminal ankyrin repeat). Interacts (GTP-bound form) with rab-5 GAP, tbc-2 (via putative coiled coil domain). Interacts (GTP-bound form) with amph-1. As to expression, almost ubiquitously expressed. Expressed in intestine, hypodermis, seam cells, body-wall muscles, many neurons, oviduct sheath cell, spermatheca, coelomocytes and pharyngeal and nerve ring.

The protein localises to the early endosome membrane. It localises to the late endosome membrane. It is found in the golgi apparatus membrane. The protein resides in the endosome membrane. It catalyses the reaction GTP + H2O = GDP + phosphate + H(+). Its activity is regulated as follows. Rab activation is generally mediated by a guanine exchange factor (GEF), while inactivation through hydrolysis of bound GTP is catalyzed by a GTPase activating protein (GAP). Tbc-4 is a likely GAP of this rab. Denn-4 is a putative GEF of this rab. Functionally, the small GTPases Rab are key regulators of intracellular membrane trafficking, from the formation of transport vesicles to their fusion with membranes. Rabs cycle between an inactive GDP-bound form and an active GTP-bound form that is able to recruit to membranes different set of downstream effectors directly responsible for vesicle formation, movement, tethering and fusion. Required for basolateral endocytic recycling, the return of macromolecules and fluid from endosomes to the plasma membrane, in polarized epithelial cells of the intestine upstream of rme-1. Involved in the formation of the endosomal tubular network that is required for basolateral recycling of clathrin-independent endocytic cargo such as daf-4 in the intestine. Required for the recruitment of cnt-1 effector to endosomal membranes in the intestinal epithelium, which is important for the regulation of levels of endosomal phosphatidylinositol-4,5-bisphosphate, a key phosphoinositide in membrane traffic, and for the recruitment of endosomal membrane-bending proteins, rme-1 and sdpn-1. Recruits the rab-5 GTPase-activating protein tbc-2 to endosomes where it then inactivates rab-5 resulting in removal of rab-5 from membranes, which is necessary for cargo transport from early endosomes to recycling endosomes in the basolateral intestine. Regulates recycling of synaptic membrane AMPA glutamate receptor, glr-1, from intracellular endosomal compartments back to synapses in a cholesterol-dependent endocytosis pathway functioning after clathrin-independent endocytosis in command interneurons. Regulates neuropeptide release from dense core vesicles (DCVs) of cholinergic motoneurons in cooperation with rab-5. They reciprocally recruit each other's inactivating GAP molecule leading to local exclusion of one or the other rab protein at the Golgi-endosomal interphase at an essential stage during DCV sorting. Regulates membrane trafficking of membranes and dendrite proteins from the Golgi and/or endosomal compartments to plasma membrane during dendrite morphogenesis together with the exocyst complex in the multi-dendritic PVD sensory neurons acting in a cell-autonomous manner and requiring its GTPase activity. Functions cell-autonomously together with the exocyst complex to regulate dendrite morphogenesis and anterior-posterior patterning of the PVD neurons dendritic arbor by balancing the anterograde and retrograde transport via molecular motors unc-116 (kinesin heavy chain) and dhc-1 (dynein heavy chain) to appropriately transport branching factors, such as dma-1, to the specific subcellular regions of the developing dendrite in its GTPase activity-dependent manner. This is Ras-related protein Rab-10 from Caenorhabditis elegans.